The primary structure comprises 281 residues: Ribosomal RNA small subunit methyltransferase A (281 aa).

Positions 24, 26, 51, 72, 96, and 123 each coordinate S-adenosyl-L-methionine.

It belongs to the class I-like SAM-binding methyltransferase superfamily. rRNA adenine N(6)-methyltransferase family. RsmA subfamily.

The protein localises to the cytoplasm. The enzyme catalyses adenosine(1518)/adenosine(1519) in 16S rRNA + 4 S-adenosyl-L-methionine = N(6)-dimethyladenosine(1518)/N(6)-dimethyladenosine(1519) in 16S rRNA + 4 S-adenosyl-L-homocysteine + 4 H(+). Specifically dimethylates two adjacent adenosines (A1518 and A1519) in the loop of a conserved hairpin near the 3'-end of 16S rRNA in the 30S particle. May play a critical role in biogenesis of 30S subunits. The sequence is that of Ribosomal RNA small subunit methyltransferase A from Ureaplasma urealyticum serovar 10 (strain ATCC 33699 / Western).